The primary structure comprises 119 residues: NADH-ubiquinone oxidoreductase chain 3 (119 aa).

3 helical membrane-spanning segments follow: residues 8–28, 63–83, and 88–108; these read IFIY…VPFL, LVSI…PWAV, and IDLF…IGFL.

The protein belongs to the complex I subunit 3 family.

Its subcellular location is the mitochondrion membrane. It catalyses the reaction a ubiquinone + NADH + 5 H(+)(in) = a ubiquinol + NAD(+) + 4 H(+)(out). Functionally, core subunit of the mitochondrial membrane respiratory chain NADH dehydrogenase (Complex I) that is believed to belong to the minimal assembly required for catalysis. Complex I functions in the transfer of electrons from NADH to the respiratory chain. The immediate electron acceptor for the enzyme is believed to be ubiquinone. The polypeptide is NADH-ubiquinone oxidoreductase chain 3 (ND3) (Brassica napus (Rape)).